A 187-amino-acid chain; its full sequence is Peptide deformylase (187 aa).

Residues cysteine 96 and histidine 138 each coordinate Fe cation. Glutamate 139 is a catalytic residue. Histidine 142 is a binding site for Fe cation.

Belongs to the polypeptide deformylase family. Fe(2+) serves as cofactor.

The catalysed reaction is N-terminal N-formyl-L-methionyl-[peptide] + H2O = N-terminal L-methionyl-[peptide] + formate. Removes the formyl group from the N-terminal Met of newly synthesized proteins. Requires at least a dipeptide for an efficient rate of reaction. N-terminal L-methionine is a prerequisite for activity but the enzyme has broad specificity at other positions. The polypeptide is Peptide deformylase (Brachyspira hyodysenteriae (strain ATCC 49526 / WA1)).